The chain runs to 495 residues: Probable cytosol aminopeptidase (495 aa).

The Mn(2+) site is built by K266 and D271. Residue K278 is part of the active site. Mn(2+)-binding residues include D289, D348, and E350. Residue R352 is part of the active site.

Belongs to the peptidase M17 family. Mn(2+) is required as a cofactor.

Its subcellular location is the cytoplasm. The enzyme catalyses Release of an N-terminal amino acid, Xaa-|-Yaa-, in which Xaa is preferably Leu, but may be other amino acids including Pro although not Arg or Lys, and Yaa may be Pro. Amino acid amides and methyl esters are also readily hydrolyzed, but rates on arylamides are exceedingly low.. It catalyses the reaction Release of an N-terminal amino acid, preferentially leucine, but not glutamic or aspartic acids.. Functionally, presumably involved in the processing and regular turnover of intracellular proteins. Catalyzes the removal of unsubstituted N-terminal amino acids from various peptides. The sequence is that of Probable cytosol aminopeptidase from Pseudomonas aeruginosa (strain UCBPP-PA14).